We begin with the raw amino-acid sequence, 335 residues long: Glyceraldehyde-3-phosphate dehydrogenase (335 aa).

NAD(+) contacts are provided by residues 10 to 11 (RI), aspartate 31, arginine 75, and threonine 122. D-glyceraldehyde 3-phosphate-binding positions include 152–154 (SCT) and threonine 183. Cysteine 153 acts as the Nucleophile in catalysis. Asparagine 184 lines the NAD(+) pocket. D-glyceraldehyde 3-phosphate is bound by residues arginine 198, 211 to 212 (TG), and arginine 234. An NAD(+)-binding site is contributed by asparagine 318.

It belongs to the glyceraldehyde-3-phosphate dehydrogenase family. As to quaternary structure, homotetramer.

It localises to the cytoplasm. It carries out the reaction D-glyceraldehyde 3-phosphate + phosphate + NAD(+) = (2R)-3-phospho-glyceroyl phosphate + NADH + H(+). It participates in carbohydrate degradation; glycolysis; pyruvate from D-glyceraldehyde 3-phosphate: step 1/5. Functionally, catalyzes the oxidative phosphorylation of glyceraldehyde 3-phosphate (G3P) to 1,3-bisphosphoglycerate (BPG) using the cofactor NAD. The first reaction step involves the formation of a hemiacetal intermediate between G3P and a cysteine residue, and this hemiacetal intermediate is then oxidized to a thioester, with concomitant reduction of NAD to NADH. The reduced NADH is then exchanged with the second NAD, and the thioester is attacked by a nucleophilic inorganic phosphate to produce BPG. This Borreliella burgdorferi (strain ATCC 35210 / DSM 4680 / CIP 102532 / B31) (Borrelia burgdorferi) protein is Glyceraldehyde-3-phosphate dehydrogenase (gap).